We begin with the raw amino-acid sequence, 332 residues long: Tryptophan--tRNA ligase (332 aa).

Residues 13-15 (KPS) and 21-22 (GN) contribute to the ATP site. A 'HIGH' region motif is present at residues 14–22 (PSGDLTLGN). Residue Asp-137 coordinates L-tryptophan. ATP contacts are provided by residues 149-151 (GKD), Ile-188, and 197-201 (KMSKS). The 'KMSKS' region motif lies at 197-201 (KMSKS).

The protein belongs to the class-I aminoacyl-tRNA synthetase family. As to quaternary structure, homodimer.

It localises to the cytoplasm. The enzyme catalyses tRNA(Trp) + L-tryptophan + ATP = L-tryptophyl-tRNA(Trp) + AMP + diphosphate + H(+). Functionally, catalyzes the attachment of tryptophan to tRNA(Trp). The sequence is that of Tryptophan--tRNA ligase from Clostridium perfringens (strain 13 / Type A).